A 442-amino-acid polypeptide reads, in one-letter code: Kelch domain-containing protein 10 (442 aa).

Residues 1–58 (MSAAQGWDRNRRRGGGAAGGGGGGSGAGGGSGGNGGRGTGQLNRFVQLSGRPHLPGKK) form a disordered region. Arginine 13 carries the omega-N-methylarginine modification. Gly residues predominate over residues 15-39 (GGAAGGGGGGSGAGGGSGGNGGRGT). 6 Kelch repeats span residues 87-154 (RPPP…PREL), 155-198 (ASMS…ALLS), 199-260 (CRGK…PEER), 261-319 (YRHE…RRCH), 320-364 (SCVQ…PEPV), and 365-403 (YFHC…LVVP). Positions 401 to 442 (VVPSLLELAWEKLLAAFPNLANLSRTQLLHLGLTQGLIERLK) are interaction with CUL2.

This sequence belongs to the KLHDC10 family. Component of a CRL2 E3 ubiquitin-protein ligase complex, also named ECS (Elongin BC-CUL2/5-SOCS-box protein) complex, composed of CUL2, Elongin BC (ELOB and ELOC), RBX1 and substrate-specific adapter KLHDC10. Interacts (via the 6 Kelch repeats) with PPP5C.

It is found in the nucleus. The protein resides in the cytoplasm. The protein operates within protein modification; protein ubiquitination. In terms of biological role, substrate-recognition component of a Cul2-RING (CRL2) E3 ubiquitin-protein ligase complex of the DesCEND (destruction via C-end degrons) pathway, which recognizes a C-degron located at the extreme C-terminus of target proteins, leading to their ubiquitination and degradation. The C-degron recognized by the DesCEND pathway is usually a motif of less than ten residues and can be present in full-length proteins, truncated proteins or proteolytically cleaved forms. The CRL2(KLHDC10) complex specifically recognizes proteins with a proline-glycine (Pro-Gly) or an alanine tail (CAT tail) at the C-terminus, leading to their ubiquitination and degradation. The CRL2(KLHDC10) complex is involved in the ribosome-associated quality control (RQC) pathway, which mediates the extraction of incompletely synthesized nascent chains from stalled ribosomes: CRL2(KLHDC10) acts downstream of NEMF and recognizes CAT tails associated with stalled nascent chains, leading to their ubiquitination and degradation. Participates in the oxidative stress-induced cell death through MAP3K5 activation. Inhibits PPP5C phosphatase activity on MAP3K5. Acts as a regulator of necroptosis. The protein is Kelch domain-containing protein 10 (KLHDC10) of Bos taurus (Bovine).